We begin with the raw amino-acid sequence, 2100 residues long: General negative regulator of transcription subunit 1 (2100 aa).

Positions 1–36 (MKSQEQQTPETREKSSSTSESGHPISLDSKTPPPND) are disordered. Phosphoserine occurs at positions 1341 and 1568.

It is found in the cytoplasm. The protein resides in the nucleus. Functionally, acts as a component of the CCR4-NOT core complex, which in the nucleus seems to be a general transcription factor, and in the cytoplasm the major mRNA deadenylase involved in mRNA turnover. The NOT protein subcomplex negatively regulates the basal and activated transcription of many genes. Preferentially affects TC-type TATA element-dependent transcription. Could directly or indirectly inhibit component(s) of the general transcription machinery. The chain is General negative regulator of transcription subunit 1 (not1) from Schizosaccharomyces pombe (strain 972 / ATCC 24843) (Fission yeast).